Consider the following 166-residue polypeptide: Large ribosomal subunit protein uL11x (166 aa).

It belongs to the universal ribosomal protein uL11 family.

Binds directly to 26S ribosomal RNA. In Arabidopsis thaliana (Mouse-ear cress), this protein is Large ribosomal subunit protein uL11x (RPL12C).